The chain runs to 160 residues: Cytochrome b6-f complex subunit 4 (160 aa).

3 helical membrane-spanning segments follow: residues 36-56 (LLYI…GLAV), 95-115 (LLGI…PFIE), and 131-151 (TVFL…ALPI).

The protein belongs to the cytochrome b family. PetD subfamily. As to quaternary structure, the 4 large subunits of the cytochrome b6-f complex are cytochrome b6, subunit IV (17 kDa polypeptide, PetD), cytochrome f and the Rieske protein, while the 4 small subunits are PetG, PetL, PetM and PetN. The complex functions as a dimer.

Its subcellular location is the cellular thylakoid membrane. Component of the cytochrome b6-f complex, which mediates electron transfer between photosystem II (PSII) and photosystem I (PSI), cyclic electron flow around PSI, and state transitions. This is Cytochrome b6-f complex subunit 4 from Parasynechococcus marenigrum (strain WH8102).